The sequence spans 723 residues: Polyribonucleotide nucleotidyltransferase (723 aa).

2 residues coordinate Mg(2+): aspartate 488 and aspartate 494. Residues 555–614 (PKIITLNIKPEKIKDVIGPGGKQINAIIDETGVKIDIEQDGTVYIASQDQAMNRKAIAII) enclose the KH domain. Residues 624-692 (GEVYTGKVRR…QQGRVNLSRK (69 aa)) enclose the S1 motif domain. Residues 692–723 (KALLEKKEQPEGDKKPQAEKKFYPKTKKPESK) form a disordered region. Residues 693–723 (ALLEKKEQPEGDKKPQAEKKFYPKTKKPESK) are compositionally biased toward basic and acidic residues.

It belongs to the polyribonucleotide nucleotidyltransferase family. Mg(2+) serves as cofactor.

The protein resides in the cytoplasm. It catalyses the reaction RNA(n+1) + phosphate = RNA(n) + a ribonucleoside 5'-diphosphate. Functionally, involved in mRNA degradation. Catalyzes the phosphorolysis of single-stranded polyribonucleotides processively in the 3'- to 5'-direction. The chain is Polyribonucleotide nucleotidyltransferase from Listeria monocytogenes serotype 4a (strain HCC23).